Consider the following 83-residue polypeptide: Putative beta-neurotoxin RjAa12f (83 aa).

Residues 1-18 (MKILIFIIASFMLIGVEC) form the signal peptide. Residues 19–82 (KEGYPMGRDG…VWDSSTNKCG (64 aa)) enclose the LCN-type CS-alpha/beta domain. 4 disulfide bridges follow: cysteine 29/cysteine 81, cysteine 33/cysteine 55, cysteine 40/cysteine 62, and cysteine 44/cysteine 64. A propeptide is located at residue glycine 83.

Contains 4 disulfide bonds. As to expression, expressed by the venom gland.

The protein localises to the secreted. Its function is as follows. Beta toxins bind voltage-independently at site-4 of sodium channels (Nav) and shift the voltage of activation toward more negative potentials thereby affecting sodium channel activation and promoting spontaneous and repetitive firing. This toxin is lethal to insects (A.domestica). It is not toxic to mice and does not affect mammal F11 sodium channels. This chain is Putative beta-neurotoxin RjAa12f, found in Rhopalurus junceus (Caribbean blue scorpion).